A 339-amino-acid chain; its full sequence is Ketol-acid reductoisomerase (NADP(+)) (339 aa).

Positions 1–182 constitute a KARI N-terminal Rossmann domain; the sequence is MRVYYDRDAD…GGGRSGIIET (182 aa). NADP(+)-binding positions include 24–27, lysine 48, serine 51, threonine 53, and 83–86; these read YGSQ and DELQ. Histidine 108 is an active-site residue. Glycine 134 contacts NADP(+). The KARI C-terminal knotted domain occupies 183 to 328; that stretch reads NFKEECETDL…AKLRGMMPWI (146 aa). Aspartate 191, glutamate 195, glutamate 227, and glutamate 231 together coordinate Mg(2+). Substrate is bound at residue serine 252.

It belongs to the ketol-acid reductoisomerase family. Requires Mg(2+) as cofactor.

The catalysed reaction is (2R)-2,3-dihydroxy-3-methylbutanoate + NADP(+) = (2S)-2-acetolactate + NADPH + H(+). The enzyme catalyses (2R,3R)-2,3-dihydroxy-3-methylpentanoate + NADP(+) = (S)-2-ethyl-2-hydroxy-3-oxobutanoate + NADPH + H(+). It participates in amino-acid biosynthesis; L-isoleucine biosynthesis; L-isoleucine from 2-oxobutanoate: step 2/4. Its pathway is amino-acid biosynthesis; L-valine biosynthesis; L-valine from pyruvate: step 2/4. Functionally, involved in the biosynthesis of branched-chain amino acids (BCAA). Catalyzes an alkyl-migration followed by a ketol-acid reduction of (S)-2-acetolactate (S2AL) to yield (R)-2,3-dihydroxy-isovalerate. In the isomerase reaction, S2AL is rearranged via a Mg-dependent methyl migration to produce 3-hydroxy-3-methyl-2-ketobutyrate (HMKB). In the reductase reaction, this 2-ketoacid undergoes a metal-dependent reduction by NADPH to yield (R)-2,3-dihydroxy-isovalerate. In Sinorhizobium medicae (strain WSM419) (Ensifer medicae), this protein is Ketol-acid reductoisomerase (NADP(+)).